The chain runs to 274 residues: Acetyl-coenzyme A carboxylase carboxyl transferase subunit alpha (274 aa).

In terms of domain architecture, CoA carboxyltransferase C-terminal spans 1 to 245 (MENSQELTPW…RENLKKAIEG (245 aa)).

Belongs to the AccA family. In terms of assembly, acetyl-CoA carboxylase is a heterohexamer composed of biotin carboxyl carrier protein (AccB), biotin carboxylase (AccC) and two subunits each of ACCase subunit alpha (AccA) and ACCase subunit beta (AccD).

The protein localises to the cytoplasm. The catalysed reaction is N(6)-carboxybiotinyl-L-lysyl-[protein] + acetyl-CoA = N(6)-biotinyl-L-lysyl-[protein] + malonyl-CoA. The protein operates within lipid metabolism; malonyl-CoA biosynthesis; malonyl-CoA from acetyl-CoA: step 1/1. Functionally, component of the acetyl coenzyme A carboxylase (ACC) complex. First, biotin carboxylase catalyzes the carboxylation of biotin on its carrier protein (BCCP) and then the CO(2) group is transferred by the carboxyltransferase to acetyl-CoA to form malonyl-CoA. This chain is Acetyl-coenzyme A carboxylase carboxyl transferase subunit alpha, found in Clostridium acetobutylicum (strain ATCC 824 / DSM 792 / JCM 1419 / IAM 19013 / LMG 5710 / NBRC 13948 / NRRL B-527 / VKM B-1787 / 2291 / W).